Here is a 317-residue protein sequence, read N- to C-terminus: Ribosomal RNA small subunit methyltransferase H (317 aa).

S-adenosyl-L-methionine contacts are provided by residues 39-41 (GGH), D59, F83, D104, and Q111.

Belongs to the methyltransferase superfamily. RsmH family.

The protein localises to the cytoplasm. The enzyme catalyses cytidine(1402) in 16S rRNA + S-adenosyl-L-methionine = N(4)-methylcytidine(1402) in 16S rRNA + S-adenosyl-L-homocysteine + H(+). Its function is as follows. Specifically methylates the N4 position of cytidine in position 1402 (C1402) of 16S rRNA. The chain is Ribosomal RNA small subunit methyltransferase H from Paraburkholderia phymatum (strain DSM 17167 / CIP 108236 / LMG 21445 / STM815) (Burkholderia phymatum).